Here is a 122-residue protein sequence, read N- to C-terminus: Ribosome-binding factor A (122 aa).

Belongs to the RbfA family. In terms of assembly, monomer. Binds 30S ribosomal subunits, but not 50S ribosomal subunits or 70S ribosomes.

It localises to the cytoplasm. Functionally, one of several proteins that assist in the late maturation steps of the functional core of the 30S ribosomal subunit. Associates with free 30S ribosomal subunits (but not with 30S subunits that are part of 70S ribosomes or polysomes). Required for efficient processing of 16S rRNA. May interact with the 5'-terminal helix region of 16S rRNA. The polypeptide is Ribosome-binding factor A (Geotalea uraniireducens (strain Rf4) (Geobacter uraniireducens)).